Consider the following 395-residue polypeptide: Chaperone protein DnaJ (395 aa).

A J domain is found at 5 to 70 (DFYEVLGVDK…NKRAAYDRMG (66 aa)). A CR-type zinc finger spans residues 145 to 223 (GKDETIKVPT…CDGVGRVRKT (79 aa)). Zn(2+)-binding residues include C158, C161, C175, C178, C197, C200, C211, and C214. CXXCXGXG motif repeat units follow at residues 158-165 (CERCDGQG), 175-182 (CGTCQGAG), 197-204 (CPQCGGRG), and 211-218 (CNDCDGVG).

This sequence belongs to the DnaJ family. Homodimer. Zn(2+) is required as a cofactor.

The protein localises to the cytoplasm. Functionally, participates actively in the response to hyperosmotic and heat shock by preventing the aggregation of stress-denatured proteins and by disaggregating proteins, also in an autonomous, DnaK-independent fashion. Unfolded proteins bind initially to DnaJ; upon interaction with the DnaJ-bound protein, DnaK hydrolyzes its bound ATP, resulting in the formation of a stable complex. GrpE releases ADP from DnaK; ATP binding to DnaK triggers the release of the substrate protein, thus completing the reaction cycle. Several rounds of ATP-dependent interactions between DnaJ, DnaK and GrpE are required for fully efficient folding. Also involved, together with DnaK and GrpE, in the DNA replication of plasmids through activation of initiation proteins. In Maricaulis maris (strain MCS10) (Caulobacter maris), this protein is Chaperone protein DnaJ.